A 397-amino-acid chain; its full sequence is UDP-GlcNAc:betaGal beta-1,3-N-acetylglucosaminyltransferase 7 (397 aa).

Topologically, residues 1–6 (MSLWKK) are cytoplasmic. A helical transmembrane segment spans residues 7 to 26 (TLYKSVCLALALLVAVTVFQ). At 27 to 397 (RSVTPGQFLQ…LTCSVKFQVL (371 aa)) the chain is on the lumenal side. N-linked (GlcNAc...) asparagine glycans are attached at residues Asn84, Asn90, Asn210, and Asn387.

This sequence belongs to the glycosyltransferase 31 family. In terms of tissue distribution, strongly expressed in placenta and colon. Moderately expressed in lung, stomach, small intestine and kidney. Very weakly expressed in cerebrum, cerebellum, heart and testis.

Its subcellular location is the golgi apparatus membrane. The protein operates within protein modification; protein glycosylation. Its function is as follows. N-acetyl glucosamine (GlcNAc) transferase that catalyzes the transfer of GlcNAc via a beta1-&gt;3 linkage from UDP-GlcNAc to the non-reducing terminal galactose (Gal) in the linearly growing chain of N- and O-linked keratan sulfate proteoglycans. Cooperates with B4GALT4 galactosyltransferase and CHST6 and CHST1 sulfotransferases to construct and elongate mono- and disulfated disaccharide units [-&gt;3Galbeta1-&gt;4(6-sulfoGlcNAcbeta)1-&gt;] and [-&gt;3(6-sulfoGalbeta)1-&gt;4(6-sulfoGlcNAcbeta)1-&gt;] within keratan sulfate polymer. Involved in biosynthesis of N-linked keratan sulfate proteoglycans in cornea, with an impact on proteoglycan fibril organization and corneal transparency. May play a role in the maintenance of tissue architecture by suppressing cellular motility and invasion. The polypeptide is UDP-GlcNAc:betaGal beta-1,3-N-acetylglucosaminyltransferase 7 (B3gnt7) (Mus musculus (Mouse)).